The primary structure comprises 310 residues: Ribosomal RNA small subunit methyltransferase H (310 aa).

S-adenosyl-L-methionine is bound by residues G32 to H34, D52, F79, D100, and Q107.

This sequence belongs to the methyltransferase superfamily. RsmH family.

It localises to the cytoplasm. It catalyses the reaction cytidine(1402) in 16S rRNA + S-adenosyl-L-methionine = N(4)-methylcytidine(1402) in 16S rRNA + S-adenosyl-L-homocysteine + H(+). Specifically methylates the N4 position of cytidine in position 1402 (C1402) of 16S rRNA. This is Ribosomal RNA small subunit methyltransferase H from Geobacillus thermodenitrificans (strain NG80-2).